The primary structure comprises 196 residues: uncharacterized protein (196 aa).

The segment covering 21–35 (ESRRKDGSVRRERAV) has biased composition (basic and acidic residues). Disordered regions lie at residues 21–53 (ESRR…PGRG) and 65–196 (LQLS…KEKE). Over residues 66–75 (QLSNDASTSK) the composition is skewed to polar residues. Basic and acidic residues-rich tracts occupy residues 84–94 (ELEKEKLERPL), 100–143 (EKND…KDFK), and 173–196 (KMSK…KEKE).

This is an uncharacterized protein from Schizosaccharomyces pombe (strain 972 / ATCC 24843) (Fission yeast).